Here is a 417-residue protein sequence, read N- to C-terminus: MLEQMGIAAKQASYKLAQLSSREKNRVLEKIADELEAQSEIILNANAQDVADARANGLSEAMLDRLALTPARLKGIADDVRQVCNLADPVGQVIDGGVLDSGLRLERRRVPLGVIGVIYEARPNVTVDVASLCLKTGNAVILRGGKETCRTNAATVAVIQDALKSCGLPAGAVQAIDNPDRALVSEMLRMDKYIDMLIPRGGAGLHKLCREQSTIPVITGGIGVCHIYVDESAEIAEALKVIVNAKTQRPSTCNTVETLLVNKNIADSFLPALSKQMAESGVTLHADAGALAQLQTGPAKVVAVKAEEYDDEFLSLDLNVKIVSDLDDAIAHIREHGTQHSDAILTRDMRNAQRFVNEVDSSAVYVNASTRFTDGGQFGLGAEVAVSTQKLHARGPMGLEALTTYKWIGIGDYTIRA.

It belongs to the gamma-glutamyl phosphate reductase family.

Its subcellular location is the cytoplasm. It carries out the reaction L-glutamate 5-semialdehyde + phosphate + NADP(+) = L-glutamyl 5-phosphate + NADPH + H(+). It participates in amino-acid biosynthesis; L-proline biosynthesis; L-glutamate 5-semialdehyde from L-glutamate: step 2/2. Functionally, catalyzes the NADPH-dependent reduction of L-glutamate 5-phosphate into L-glutamate 5-semialdehyde and phosphate. The product spontaneously undergoes cyclization to form 1-pyrroline-5-carboxylate. In Escherichia coli O17:K52:H18 (strain UMN026 / ExPEC), this protein is Gamma-glutamyl phosphate reductase.